The chain runs to 1312 residues: AT-rich interactive domain-containing protein 4B (1312 aa).

2 disordered regions span residues proline 124–arginine 166 and lysine 266–proline 306. 3 positions are modified to phosphoserine: serine 276, serine 295, and serine 296. Residues glutamate 277–phenylalanine 305 are compositionally biased toward acidic residues. The ARID domain occupies proline 306–arginine 398. Residues lysine 429, lysine 440, and lysine 462 each participate in a glycyl lysine isopeptide (Lys-Gly) (interchain with G-Cter in SUMO2) cross-link. 5 disordered regions span residues glutamate 458 to valine 577, isoleucine 635 to serine 680, glutamine 708 to phenylalanine 894, leucine 909 to proline 1212, and serine 1252 to alanine 1288. Residues isoleucine 465–lysine 473 are antigenic epitope. Position 483 is a phosphoserine (serine 483). Residues serine 483–aspartate 496 are compositionally biased toward basic and acidic residues. A Glycyl lysine isopeptide (Lys-Gly) (interchain with G-Cter in SUMO2) cross-link involves residue lysine 517. A compositionally biased stretch (acidic residues) spans asparagine 532 to glutamate 567. The Tudor-knot domain maps to glycine 572–isoleucine 624. The span at asparagine 643–serine 656 shows a compositional bias: basic and acidic residues. Serine 666, serine 675, and serine 717 each carry phosphoserine. Composition is skewed to basic and acidic residues over residues glutamate 722–glutamine 754 and serine 778–glutamate 787. The stretch at methionine 728–glutamine 754 forms a coiled coil. Residue lysine 751 forms a Glycyl lysine isopeptide (Lys-Gly) (interchain with G-Cter in SUMO2) linkage. Phosphoserine is present on residues serine 778 and serine 790. The span at valine 788–glutamate 799 shows a compositional bias: acidic residues. Threonine 793 carries the phosphothreonine modification. Composition is skewed to basic and acidic residues over residues valine 807–serine 816, cysteine 828–leucine 852, leucine 909–valine 927, and lysine 995–glutamate 1010. Position 1014 is a phosphoserine (serine 1014). Residue threonine 1026 is modified to Phosphothreonine. Positions glutamate 1028–glutamate 1037 are enriched in low complexity. Serine 1029 carries the phosphoserine modification. Positions glycine 1038–valine 1047 are enriched in polar residues. Residues glutamate 1056 to threonine 1065 are compositionally biased toward basic and acidic residues. The segment covering serine 1087–serine 1101 has biased composition (low complexity). The segment at lysine 1130 to lysine 1137 is antigenic epitope. Basic residues predominate over residues lysine 1130–lysine 1148. Residue threonine 1150 is modified to Phosphothreonine. Residues serine 1152, serine 1153, serine 1155, and serine 1159 each carry the phosphoserine modification. Residues glutamate 1162 to proline 1191 show a composition bias toward polar residues. Residues lysine 1196–serine 1208 show a composition bias toward basic and acidic residues. Residues glutamate 1231–glutamate 1270 adopt a coiled-coil conformation. Positions alanine 1272–alanine 1288 are enriched in low complexity.

Component of a Sin3A corepressor complex consisting of SIN3A, SAP130, SUDS3/SAP45, SAP180, HDAC1 and HDAC2. Interacts with ARID4A. Interacts with AR. As to expression, highly expressed in the testis and in breast, lung, colon, pancreatic and ovarian cancers. Expressed at low levels in the thymus, prostate and ovary.

It is found in the nucleus. It localises to the cytoplasm. Acts as a transcriptional repressor. May function in the assembly and/or enzymatic activity of the Sin3A corepressor complex or in mediating interactions between the complex and other regulatory complexes. Plays a role in the regulation of epigenetic modifications at the PWS/AS imprinting center near the SNRPN promoter, where it might function as part of a complex with RB1 and ARID4A. Involved in spermatogenesis, together with ARID4A, where it functions as a transcriptional coactivator for AR (androgen receptor) and enhances expression of genes required for sperm maturation. Regulates expression of the tight junction protein CLDN3 in the testis, which is important for integrity of the blood-testis barrier. Plays a role in myeloid homeostasis where it regulates the histone methylation state of bone marrow cells and expression of various genes involved in hematopoiesis. May function as a leukemia suppressor. The polypeptide is AT-rich interactive domain-containing protein 4B (ARID4B) (Homo sapiens (Human)).